The primary structure comprises 454 residues: Pyrrolysine--tRNA ligase (454 aa).

Positions 102 to 138 (TRTKKAMPKSVARAPKPLENTEAAQAQPSGSKFSPAI) are disordered. Over residues 123–133 (EAAQAQPSGSK) the composition is skewed to polar residues.

The protein belongs to the class-II aminoacyl-tRNA synthetase family.

It is found in the cytoplasm. The enzyme catalyses tRNA(Pyl) + L-pyrrolysine + ATP = L-pyrrolysyl-tRNA(Pyl) + AMP + diphosphate. In terms of biological role, catalyzes the attachment of pyrrolysine to tRNA(Pyl). Pyrrolysine is a lysine derivative encoded by the termination codon UAG. The protein is Pyrrolysine--tRNA ligase of Methanosarcina mazei (strain ATCC BAA-159 / DSM 3647 / Goe1 / Go1 / JCM 11833 / OCM 88) (Methanosarcina frisia).